The following is a 310-amino-acid chain: tRNA dimethylallyltransferase (310 aa).

5-12 is an ATP binding site; the sequence is GPTASGKS. 7-12 is a substrate binding site; that stretch reads TASGKS. The segment at 30 to 33 is interaction with substrate tRNA; it reads DSMQ.

This sequence belongs to the IPP transferase family. In terms of assembly, monomer. The cofactor is Mg(2+).

It catalyses the reaction adenosine(37) in tRNA + dimethylallyl diphosphate = N(6)-dimethylallyladenosine(37) in tRNA + diphosphate. Catalyzes the transfer of a dimethylallyl group onto the adenine at position 37 in tRNAs that read codons beginning with uridine, leading to the formation of N6-(dimethylallyl)adenosine (i(6)A). The polypeptide is tRNA dimethylallyltransferase (Rhodopseudomonas palustris (strain HaA2)).